Reading from the N-terminus, the 861-residue chain is Ataxin-7-like protein 1 (861 aa).

5 disordered regions span residues 1 to 31 (MTSE…AMAT), 154 to 189 (GHHS…KGSR), 342 to 448 (KSRE…GADE), 606 to 673 (PIPA…LSGP), and 772 to 861 (FDKS…RTLP). Positions 284 to 351 (RRLSEREFDP…KSREKEVKDK (68 aa)) constitute an SCA7 domain. Over residues 342 to 354 (KSREKEVKDKEHL) the composition is skewed to basic and acidic residues. Over residues 355-369 (LTSTREILPSQSGPA) the composition is skewed to polar residues. Composition is skewed to low complexity over residues 372-381 (SLLGSSGSSG), 403-417 (SSAN…SNHS), and 606-616 (PIPAVIPSPSH). The span at 617-627 (KPSKTKTSKSS) shows a compositional bias: basic residues. Basic and acidic residues predominate over residues 628–641 (KVKDLSTRSDESPS). Composition is skewed to low complexity over residues 648 to 671 (QSST…SPLS) and 783 to 794 (SSSSSKACKITK). A compositionally biased stretch (polar residues) spans 817-828 (VNSTSSRQVGKN). Over residues 829–847 (SSLALSQSSPSSISSPGHS) the composition is skewed to low complexity.

This is Ataxin-7-like protein 1 (ATXN7L1) from Homo sapiens (Human).